The sequence spans 256 residues: tRNA (guanine-N(7)-)-methyltransferase (256 aa).

The interval 17–45 (TCETVPGLPQKKHYRQRAHSNPHSDHDIE) is disordered. Positions 26 to 36 (QKKHYRQRAHS) are enriched in basic residues. Residues Gly74, 97-98 (EI), 132-133 (NA), and Leu152 each bind S-adenosyl-L-methionine. Asp155 is a catalytic residue. Residue 230-232 (TEE) coordinates S-adenosyl-L-methionine.

The protein belongs to the class I-like SAM-binding methyltransferase superfamily. TrmB family.

It localises to the nucleus. The enzyme catalyses guanosine(46) in tRNA + S-adenosyl-L-methionine = N(7)-methylguanosine(46) in tRNA + S-adenosyl-L-homocysteine. It participates in tRNA modification; N(7)-methylguanine-tRNA biosynthesis. Catalyzes the formation of N(7)-methylguanine at position 46 (m7G46) in tRNA. This is tRNA (guanine-N(7)-)-methyltransferase from Caenorhabditis elegans.